We begin with the raw amino-acid sequence, 159 residues long: Odorant-binding protein (159 aa).

Belongs to the calycin superfamily. Lipocalin family. As to quaternary structure, homodimer.

Its subcellular location is the secreted. Its function is as follows. This protein binds a wide variety of chemical odorants. In Bos taurus (Bovine), this protein is Odorant-binding protein.